A 420-amino-acid chain; its full sequence is Transcription activator GLK1 (420 aa).

Positions 74 to 152 (GDFSNHMNAS…NRISNNEGKR (79 aa)) are disordered. A compositionally biased stretch (basic and acidic residues) spans 106 to 117 (KGEEVVSKRDDV). Positions 135–147 (SSSASSKNNRISN) are enriched in low complexity. The segment at residues 150–209 (GKRKVKVDWTPELHRRFVEAVEQLGVDKAVPSRILELMGVHCLTRHNVASHLQKYRSHRK) is a DNA-binding region (myb-like GARP).

In terms of assembly, interacts with NAC92. As to expression, expressed in rosette and cauline leaves. Expressed at low levels in cotyledons and shoots.

Its subcellular location is the nucleus. In terms of biological role, transcriptional activator that functions with GLK2 to promote chloroplast development. Acts as an activator of nuclear photosynthetic genes involved in chlorophyll biosynthesis, light harvesting, and electron transport. Acts in a cell-autonomous manner to coordinate and maintain the photosynthetic apparatus within individual cells. May function in photosynthetic capacity optimization by integrating responses to variable environmental and endogenous cues. Prevents premature senescence. In Arabidopsis thaliana (Mouse-ear cress), this protein is Transcription activator GLK1 (GLK1).